A 31-amino-acid polypeptide reads, in one-letter code: Cyclotide cter-E (31 aa).

The segment at residues 1 to 31 (GIPCAESCVWIPCTVTALLGCSCKDKVCYLD) is a cross-link (cyclopeptide (Gly-Asp)). Intrachain disulfides connect C4-C21, C8-C23, and C13-C28.

In terms of processing, contains 3 disulfide bonds. This is a cyclic peptide.

Its function is as follows. Probably participates in a plant defense mechanism. This chain is Cyclotide cter-E, found in Clitoria ternatea (Butterfly pea).